Consider the following 362-residue polypeptide: UDP-N-acetylglucosamine--N-acetylmuramyl-(pentapeptide) pyrophosphoryl-undecaprenol N-acetylglucosamine transferase (362 aa).

Residues Arg166, Ser196, and Gln290 each contribute to the UDP-N-acetyl-alpha-D-glucosamine site.

It belongs to the glycosyltransferase 28 family. MurG subfamily.

Its subcellular location is the cell membrane. The catalysed reaction is Mur2Ac(oyl-L-Ala-gamma-D-Glu-L-Lys-D-Ala-D-Ala)-di-trans,octa-cis-undecaprenyl diphosphate + UDP-N-acetyl-alpha-D-glucosamine = beta-D-GlcNAc-(1-&gt;4)-Mur2Ac(oyl-L-Ala-gamma-D-Glu-L-Lys-D-Ala-D-Ala)-di-trans,octa-cis-undecaprenyl diphosphate + UDP + H(+). It participates in cell wall biogenesis; peptidoglycan biosynthesis. Its function is as follows. Cell wall formation. Catalyzes the transfer of a GlcNAc subunit on undecaprenyl-pyrophosphoryl-MurNAc-pentapeptide (lipid intermediate I) to form undecaprenyl-pyrophosphoryl-MurNAc-(pentapeptide)GlcNAc (lipid intermediate II). The polypeptide is UDP-N-acetylglucosamine--N-acetylmuramyl-(pentapeptide) pyrophosphoryl-undecaprenol N-acetylglucosamine transferase (Staphylococcus carnosus (strain TM300)).